The primary structure comprises 236 residues: DNA repair protein RecO (236 aa).

The protein belongs to the RecO family.

Its function is as follows. Involved in DNA repair and RecF pathway recombination. The polypeptide is DNA repair protein RecO (Haemophilus influenzae (strain 86-028NP)).